A 1499-amino-acid polypeptide reads, in one-letter code: DENN domain-containing protein 4B (1499 aa).

The tract at residues 26 to 45 (PEEKWVPEPTGPLRPPRPAE) is disordered. A compositionally biased stretch (pro residues) spans 34-44 (PTGPLRPPRPA). Positions 44–203 (AEPITDVAVI…AVYLCYKVGL (160 aa)) constitute an MABP domain. Residues 195–369 (VYLCYKVGLA…NVPFPSPQRP (175 aa)) form the uDENN domain. A cDENN domain is found at 390–526 (PLPLSGASFL…PYKLLLATLT (137 aa)). Residues 528–644 (LYQQLDQTYT…ECSFGSARHA (117 aa)) form the dDENN domain. A disordered region spans residues 717 to 744 (PQEQQGALPVPGPSRSAPSSPAPRRTKQ). Positions 729 to 739 (PSRSAPSSPAP) are enriched in low complexity. 2 PPR repeats span residues 775 to 811 (WFLC…VVLP) and 812 to 846 (DEVC…GIVP). 3 disordered regions span residues 890 to 968 (PLKD…ARGT), 988 to 1115 (PRGS…SLGS), and 1204 to 1226 (RPSA…APAP). The span at 897-915 (QQQQQQQQQQQKQQVAEQQ) shows a compositional bias: low complexity. Over residues 933–942 (RPLQRQTTWA) the composition is skewed to polar residues. At S951 the chain carries Phosphoserine. A compositionally biased stretch (pro residues) spans 1074-1083 (IPPPELPSDL). The residue at position 1090 (S1090) is a Phosphoserine. Residues 1103 to 1115 (GSTASESSASLGS) are compositionally biased toward low complexity.

It localises to the golgi apparatus. Its function is as follows. Guanine nucleotide exchange factor (GEF) which may activate RAB10. Promotes the exchange of GDP to GTP, converting inactive GDP-bound Rab proteins into their active GTP-bound form. The sequence is that of DENN domain-containing protein 4B (Dennd4b) from Mus musculus (Mouse).